The following is a 331-amino-acid chain: Protein RecA (331 aa).

An ATP-binding site is contributed by 66–73 (GPESSGKT).

It belongs to the RecA family.

The protein resides in the cytoplasm. Functionally, can catalyze the hydrolysis of ATP in the presence of single-stranded DNA, the ATP-dependent uptake of single-stranded DNA by duplex DNA, and the ATP-dependent hybridization of homologous single-stranded DNAs. It interacts with LexA causing its activation and leading to its autocatalytic cleavage. The protein is Protein RecA of Lactobacillus delbrueckii subsp. bulgaricus (strain ATCC 11842 / DSM 20081 / BCRC 10696 / JCM 1002 / NBRC 13953 / NCIMB 11778 / NCTC 12712 / WDCM 00102 / Lb 14).